We begin with the raw amino-acid sequence, 614 residues long: MNREVVTMSTGNTLPPALAALASPLNDAQLNQLQQTVTQLNAQQLAWVSGYFWGLSQSNALSVPHISAGQTASAASGKLTIIFASQTGNAKGVAQALLKEAQAAGIQAQLFDASDYKGKDLAKETHVIFVASTNGEGEAPDNALALHEFLKSKKAPKLPNLKYGVLGLGDSSYQFFCQTGKDFDQFLENLGAQRLVERLDADVDYQAAATEWRKQVLSILKDELTGAAAVTSVATFAVSQTAESHYSKEQPYTASLSTSQKITGRDSGKDVRHIEIDLADSGITYQPGDALGVWYENRPQLVNALLDSVGLSGHEEVQVDGETLSLHSALTHHYEITAANPQLVAQFAELAQSEKLTSLAQDKEALREYATRTQVIDVLREEKVTLSAIQLLSLLRRLTPRLYSIASSQSEVGEEVHLTVGVVEYEYEGEQRLGGASSFLAHQLEEGAPVKVFVEHNNNFKLPSDDNAPLIMVGPGTGIAPFRSFIQERENRGAAGKNWLLFGDRTFTQDFLYQVEWQKYLKSGVLNRLDVAFSRDQHEKVYVQHRLLEQAELVWQWLQEGAYFYVCGDASRMAKDVHQALITVVEQQGGLNREQAEEYVSELRKAKRYQRDVY.

Residues 79-217 form the Flavodoxin-like domain; that stretch reads LTIIFASQTG…AATEWRKQVL (139 aa). FMN-binding positions include 85–90, 132–135, and 168–177; these read SQTGNA, STNG, and LGDSSYQFFC. The region spanning 249–463 is the FAD-binding FR-type domain; that stretch reads EQPYTASLST…VEHNNNFKLP (215 aa). FAD contacts are provided by residues threonine 337, threonine 371, 401–404, 419–421, tyrosine 425, and 434–437; these read RLYS, TVG, and GGAS. Residues 534–535, 540–544, and aspartate 576 contribute to the NADP(+) site; these read SR and KVYVQ. Tyrosine 614 contributes to the FAD binding site.

This sequence belongs to the NADPH-dependent sulphite reductase flavoprotein subunit CysJ family. In the N-terminal section; belongs to the flavodoxin family. The protein in the C-terminal section; belongs to the flavoprotein pyridine nucleotide cytochrome reductase family. In terms of assembly, alpha(8)-beta(8). The alpha component is a flavoprotein, the beta component is a hemoprotein. FAD serves as cofactor. It depends on FMN as a cofactor.

It carries out the reaction hydrogen sulfide + 3 NADP(+) + 3 H2O = sulfite + 3 NADPH + 4 H(+). Its pathway is sulfur metabolism; hydrogen sulfide biosynthesis; hydrogen sulfide from sulfite (NADPH route): step 1/1. Its function is as follows. Component of the sulfite reductase complex that catalyzes the 6-electron reduction of sulfite to sulfide. This is one of several activities required for the biosynthesis of L-cysteine from sulfate. The flavoprotein component catalyzes the electron flow from NADPH -&gt; FAD -&gt; FMN to the hemoprotein component. The polypeptide is Sulfite reductase [NADPH] flavoprotein alpha-component (Vibrio cholerae serotype O1 (strain ATCC 39315 / El Tor Inaba N16961)).